A 566-amino-acid chain; its full sequence is MKFSKFYAPTTKEAPKDASLPSHQFLIRGGFVEQIGSGLYNYLPLGKIMHDKISRVVKEEMNEAGALEVSFSVVTSGELWKQSGRYNVFGKELLRFKDRKDNDFVISPTNEEAAVALVRGKVTSYKQLPLNLYQINTKFRDEARPRFGLLRGREFTMKDGYSFHSSKEDLKREFDLMEATYSKIFTRLGLNFRAVEADSGAIGGSGSKEFMVLASNGEDDILCCEACRYAANVEAARRKPRVSEAEAPEADAAKFLTPNAKTIKDVAEFFKVSEFYCIKAVMKKAIYEDKEEVVVFFVRGDDELQETKAQNACKALELVDASEADVAKAGLVAGFCGPVGLKDVKFFIDNELRGANNMICGANEKDYHFVGVSVSGFNEERFKDLVKVKEGDKCPVCGGNLKLSKGIEVGHIFQLGDKYSAAMNATYLDENGKVKPFLMGCYGIGISRLIAVMIEASHDEKGCIWKKECAPFDVEIIISNLKDEAGVKFAFELYESLKKAGVSVIIDDRNERFGVKMNDFELIGFPYALLVGKEFANGKVEFITRDGLSKETIEANDAFRKIKESL.

This sequence belongs to the class-II aminoacyl-tRNA synthetase family. ProS type 1 subfamily. As to quaternary structure, homodimer.

Its subcellular location is the cytoplasm. The enzyme catalyses tRNA(Pro) + L-proline + ATP = L-prolyl-tRNA(Pro) + AMP + diphosphate. Functionally, catalyzes the attachment of proline to tRNA(Pro) in a two-step reaction: proline is first activated by ATP to form Pro-AMP and then transferred to the acceptor end of tRNA(Pro). As ProRS can inadvertently accommodate and process non-cognate amino acids such as alanine and cysteine, to avoid such errors it has two additional distinct editing activities against alanine. One activity is designated as 'pretransfer' editing and involves the tRNA(Pro)-independent hydrolysis of activated Ala-AMP. The other activity is designated 'posttransfer' editing and involves deacylation of mischarged Ala-tRNA(Pro). The misacylated Cys-tRNA(Pro) is not edited by ProRS. This chain is Proline--tRNA ligase, found in Campylobacter concisus (strain 13826).